Reading from the N-terminus, the 481-residue chain is MATTPINGHATKSPSLDAAEARRLKHNHADVVIIGAGVLGCALAVALGRQGRSVILLEASLKEPDRIVGELLQPGGVQALEKLGLRDCLEGIDSIPVKGYYVSYFNDPVPIPYPKPTPASPPPEGRCFHHGRFVMKLREAAMACPNVSVVETKATDLVTCSHTQQVLGVECTSKDNVRACYFGHLTVVADGYASKFRKQHHPHTPKVSSRFWGLELIDTKLPMPYYGHVLLSDNAPILLYQIGTHETRILVDIPENLPSASVKNGGVKSHMRNVVLPSLPESVQPAFIAALEQGQLRSMPNSFLPAATNTTPGLVILGDALNMRHPLTGGGMTVAFNDVVTLRNLLSPEKVPNLGDTKRVMKQLSTFHWERKKAASVINILAQALYSLFAADNQYLRALQRGCFRYFQLGLVDGPAGLLGGLIQKPSVLFVHFFSVALLSLWVLLREYPPYLFPVALFKCIMTFWTACVVIFPYMLIEAFC.

The helical transmembrane segment at 28 to 48 (HADVVIIGAGVLGCALAVALG) threads the bilayer. FAD is bound by residues 38-39 (VL), 58-59 (EA), R66, and R138. N-linked (GlcNAc...) asparagine glycosylation is present at N146. FAD contacts are provided by D319 and M332. The next 2 helical transmembrane spans lie at 425–445 (KPSVLFVHFFSVALLSLWVLL) and 452–472 (LFPVALFKCIMTFWTACVVIF).

Belongs to the squalene monooxygenase family. The cofactor is FAD.

Its subcellular location is the endoplasmic reticulum membrane. The protein localises to the microsome membrane. The enzyme catalyses squalene + reduced [NADPH--hemoprotein reductase] + O2 = (S)-2,3-epoxysqualene + oxidized [NADPH--hemoprotein reductase] + H2O + H(+). It participates in steroid metabolism; ergosterol biosynthesis. In terms of biological role, squalene epoxidase; part of the third module of ergosterol biosynthesis pathway that includes the late steps of the pathway. Erg1 catalyzes the epoxidation of squalene into 2,3-epoxysqualene. The third module or late pathway involves the ergosterol synthesis itself through consecutive reactions that mainly occur in the endoplasmic reticulum (ER) membrane. Firstly, the squalene synthase erg9 catalyzes the condensation of 2 farnesyl pyrophosphate moieties to form squalene, which is the precursor of all steroids. Squalene synthase is crucial for balancing the incorporation of farnesyl diphosphate (FPP) into sterol and nonsterol isoprene synthesis. Secondly, squalene is converted into lanosterol by the consecutive action of the squalene epoxidase erg1 and the lanosterol synthase erg7. Then, the delta(24)-sterol C-methyltransferase erg6 methylates lanosterol at C-24 to produce eburicol. Eburicol is the substrate of the sterol 14-alpha demethylase encoded by cyp51A and cyp51B, to yield 4,4,24-trimethyl ergosta-8,14,24(28)-trienol. The C-14 reductase erg24 then reduces the C14=C15 double bond which leads to 4,4-dimethylfecosterol. A sequence of further demethylations at C-4, involving the C-4 demethylation complex containing the C-4 methylsterol oxidases erg25A or erg25B, the sterol-4-alpha-carboxylate 3-dehydrogenase erg26 and the 3-keto-steroid reductase erg27, leads to the production of fecosterol via 4-methylfecosterol. The C-8 sterol isomerase erg2 then catalyzes the reaction which results in unsaturation at C-7 in the B ring of sterols and thus converts fecosterol to episterol. The sterol-C5-desaturase erg3B then catalyzes the introduction of a C-5 double bond in the B ring to produce 5-dehydroepisterol. The 2 other sterol-C5-desaturases, erg3A and erg3C, seem to be less important in ergosterol biosynthesis. The C-22 sterol desaturase erg5 further converts 5-dehydroepisterol into ergosta-5,7,22,24(28)-tetraen-3beta-ol by forming the C-22(23) double bond in the sterol side chain. Finally, ergosta-5,7,22,24(28)-tetraen-3beta-ol is substrate of the C-24(28) sterol reductases erg4A and erg4B to produce ergosterol. Possible alternative sterol biosynthetic pathways might exist from fecosterol to ergosterol, depending on the activities of the erg3 isoforms. The sequence is that of Squalene epoxidase erg1 from Aspergillus fumigatus (strain ATCC MYA-4609 / CBS 101355 / FGSC A1100 / Af293) (Neosartorya fumigata).